Reading from the N-terminus, the 405-residue chain is Transposase from transposon Tn916 (405 aa).

A Core-binding (CB) domain is found at 79-163 (GKKMTLCQLY…SLKASFYIAI (85 aa)). Residues 186-392 (VPKTVLTEEQ…TFDSAMAEMK (207 aa)) form the Tyr recombinase domain. Catalysis depends on residues arginine 225, lysine 264, histidine 343, arginine 346, and histidine 369. The active-site O-(3'-phospho-DNA)-tyrosine intermediate is tyrosine 379.

This sequence belongs to the 'phage' integrase family.

The sequence is that of Transposase from transposon Tn916 (Int-Tn) from Enterococcus faecalis (Streptococcus faecalis).